The sequence spans 355 residues: Guanine nucleotide-binding protein G(z) subunit alpha (355 aa).

Residues 1–14 show a composition bias toward basic and acidic residues; the sequence is MGCRQSSEEKEAAR. A disordered region spans residues 1–26; that stretch reads MGCRQSSEEKEAARRSRRIDRHLRSE. G2 is lipidated: N-myristoyl glycine. Residue C3 is the site of S-palmitoyl cysteine attachment. The G-alpha domain maps to 32-355; the sequence is REIKLLLLGT…QNNLKYIGLC (324 aa). Residues 35–48 form a G1 motif region; that stretch reads KLLLLGTSNSGKST. GTP is bound by residues 40 to 47, 176 to 182, 201 to 205, 270 to 273, and A327; these read GTSNSGKS, LRSRDMT, DVGGQ, and NKKD. S47 serves as a coordination point for Mg(2+). Positions 174-182 are G2 motif; that stretch reads DILRSRDMT. R179 is subject to ADP-ribosylarginine; by cholera toxin. T182 contacts Mg(2+). The interval 197–206 is G3 motif; it reads FKMVDVGGQR. The interval 266–273 is G4 motif; the sequence is ILFLNKKD. The interval 325-330 is G5 motif; that stretch reads TCATDT.

Belongs to the G-alpha family. G(i/o/t/z) subfamily. In terms of assembly, G-proteins are composed of 3 units; alpha, beta and gamma. The alpha chain contains the guanine nucleotide binding site. Interacts with ADGRB2.

It localises to the membrane. Functionally, guanine nucleotide-binding proteins (G proteins) are involved as modulators or transducers in various transmembrane signaling systems. In Homo sapiens (Human), this protein is Guanine nucleotide-binding protein G(z) subunit alpha (GNAZ).